The chain runs to 106 residues: Secreted RxLR effector protein 18 (106 aa).

The first 17 residues, 1–17 (MRGSTAMLLAAIALFSS), serve as a signal peptide directing secretion. The short motif at 28–39 (RTLRSFEELEER) is the RxLR-dEER element.

The protein belongs to the RxLR effector family.

The protein resides in the secreted. The protein localises to the host cell. Effector that may act as a suppressor of cell death to interrupt plant immunity. I. This chain is Secreted RxLR effector protein 18, found in Plasmopara viticola (Downy mildew of grapevine).